We begin with the raw amino-acid sequence, 198 residues long: NAD(P)H dehydrogenase (quinone) (198 aa).

One can recognise a Flavodoxin-like domain in the interval 6-190 (ILVLYYSRHG…LCRALGKRLA (185 aa)). Residues 12–17 (SRHGAT), 79–81 (TRF), 114–120 (STASLHG), and histidine 135 each bind FMN.

Belongs to the WrbA family. In terms of assembly, homodimer. It depends on FMN as a cofactor.

It carries out the reaction a quinone + NADH + H(+) = a quinol + NAD(+). The catalysed reaction is a quinone + NADPH + H(+) = a quinol + NADP(+). The polypeptide is NAD(P)H dehydrogenase (quinone) (Pseudomonas aeruginosa (strain ATCC 15692 / DSM 22644 / CIP 104116 / JCM 14847 / LMG 12228 / 1C / PRS 101 / PAO1)).